The chain runs to 176 residues: Bifunctional protein PyrR (176 aa).

The PRPP-binding signature appears at 93-105 (VILVDDVLYTGRT).

The protein belongs to the purine/pyrimidine phosphoribosyltransferase family. PyrR subfamily. As to quaternary structure, homodimer and homohexamer; in equilibrium.

It carries out the reaction UMP + diphosphate = 5-phospho-alpha-D-ribose 1-diphosphate + uracil. Regulates transcriptional attenuation of the pyrimidine nucleotide (pyr) operon by binding in a uridine-dependent manner to specific sites on pyr mRNA. This disrupts an antiterminator hairpin in the RNA and favors formation of a downstream transcription terminator, leading to a reduced expression of downstream genes. In terms of biological role, also displays a weak uracil phosphoribosyltransferase activity which is not physiologically significant. The sequence is that of Bifunctional protein PyrR from Streptococcus mutans serotype c (strain ATCC 700610 / UA159).